The sequence spans 313 residues: 2,3-dihydroxyphenylpropionate/2,3-dihydroxicinnamic acid 1,2-dioxygenase (313 aa).

Histidine 116 (proton donor) is an active-site residue. The Proton acceptor role is filled by histidine 180.

It belongs to the LigB/MhpB extradiol dioxygenase family. In terms of assembly, homotetramer. Fe(2+) is required as a cofactor.

It catalyses the reaction 3-(2,3-dihydroxyphenyl)propanoate + O2 = (2Z,4E)-2-hydroxy-6-oxonona-2,4-dienedioate + H(+). It carries out the reaction (2E)-3-(2,3-dihydroxyphenyl)prop-2-enoate + O2 = (2Z,4E,7E)-2-hydroxy-6-oxonona-2,4,7-trienedioate + H(+). Its pathway is aromatic compound metabolism; 3-phenylpropanoate degradation. Catalyzes the non-heme iron(II)-dependent oxidative cleavage of 2,3-dihydroxyphenylpropionic acid and 2,3-dihydroxicinnamic acid into 2-hydroxy-6-ketononadienedioate and 2-hydroxy-6-ketononatrienedioate, respectively. This is 2,3-dihydroxyphenylpropionate/2,3-dihydroxicinnamic acid 1,2-dioxygenase from Mycobacterium sp. (strain MCS).